The sequence spans 644 residues: Acetyl-coenzyme A synthetase 2 (644 aa).

CoA is bound by residues 189–192, threonine 307, and asparagine 331; that span reads RGGK. ATP-binding positions include 383–385, 407–412, aspartate 496, and arginine 511; these read GEP and DTWWQT. Residue serine 519 participates in CoA binding. ATP is bound at residue arginine 522. The Mg(2+) site is built by valine 533, histidine 535, and valine 538. Lysine 605 carries the post-translational modification N6-acetyllysine.

The protein belongs to the ATP-dependent AMP-binding enzyme family. Mg(2+) is required as a cofactor. In terms of processing, acetylated. Deacetylation by the SIR2-homolog deacetylase activates the enzyme.

The catalysed reaction is acetate + ATP + CoA = acetyl-CoA + AMP + diphosphate. Catalyzes the conversion of acetate into acetyl-CoA (AcCoA), an essential intermediate at the junction of anabolic and catabolic pathways. AcsA undergoes a two-step reaction. In the first half reaction, AcsA combines acetate with ATP to form acetyl-adenylate (AcAMP) intermediate. In the second half reaction, it can then transfer the acetyl group from AcAMP to the sulfhydryl group of CoA, forming the product AcCoA. This is Acetyl-coenzyme A synthetase 2 from Pseudomonas putida (strain ATCC 47054 / DSM 6125 / CFBP 8728 / NCIMB 11950 / KT2440).